A 467-amino-acid chain; its full sequence is Argininosuccinate lyase (467 aa).

The protein belongs to the lyase 1 family. Argininosuccinate lyase subfamily.

It localises to the cytoplasm. The catalysed reaction is 2-(N(omega)-L-arginino)succinate = fumarate + L-arginine. The protein operates within amino-acid biosynthesis; L-arginine biosynthesis; L-arginine from L-ornithine and carbamoyl phosphate: step 3/3. The chain is Argininosuccinate lyase from Campylobacter curvus (strain 525.92).